Reading from the N-terminus, the 557-residue chain is Urocanate hydratase (557 aa).

NAD(+) contacts are provided by residues 48 to 49 (GG), Gln126, 178 to 180 (GMG), Asp198, Arg203, 244 to 245 (NA), 265 to 269 (QTSAH), 274 to 275 (YL), and Tyr323. Cys411 is a catalytic residue. Gly493 contacts NAD(+).

This sequence belongs to the urocanase family. It depends on NAD(+) as a cofactor.

Its subcellular location is the cytoplasm. The enzyme catalyses 4-imidazolone-5-propanoate = trans-urocanate + H2O. The protein operates within amino-acid degradation; L-histidine degradation into L-glutamate; N-formimidoyl-L-glutamate from L-histidine: step 2/3. Functionally, catalyzes the conversion of urocanate to 4-imidazolone-5-propionate. This Beutenbergia cavernae (strain ATCC BAA-8 / DSM 12333 / CCUG 43141 / JCM 11478 / NBRC 16432 / NCIMB 13614 / HKI 0122) protein is Urocanate hydratase.